Reading from the N-terminus, the 333-residue chain is Fibronectin type III domain-containing protein 11 (333 aa).

One can recognise a Fibronectin type-III domain in the interval 212 to 310 (PVMFDRKESV…DSLTLHTRPG (99 aa)). Positions 307-333 (TRPGPPEGLAPSRLGKLGLSLTTPSER) are disordered.

The chain is Fibronectin type III domain-containing protein 11 from Bos taurus (Bovine).